Here is a 281-residue protein sequence, read N- to C-terminus: N-acetylmuramic acid 6-phosphate etherase (281 aa).

One can recognise an SIS domain in the interval 63–226 (IVPRMKQGGR…TTSVMIQLGR (164 aa)). Glu91 (proton donor) is an active-site residue. Residue Glu122 is part of the active site.

Belongs to the GCKR-like family. MurNAc-6-P etherase subfamily. Homodimer.

The catalysed reaction is N-acetyl-D-muramate 6-phosphate + H2O = N-acetyl-D-glucosamine 6-phosphate + (R)-lactate. The protein operates within amino-sugar metabolism; N-acetylmuramate degradation. Its function is as follows. Specifically catalyzes the cleavage of the D-lactyl ether substituent of MurNAc 6-phosphate, producing GlcNAc 6-phosphate and D-lactate. This chain is N-acetylmuramic acid 6-phosphate etherase, found in Bacteroides fragilis (strain YCH46).